A 265-amino-acid chain; its full sequence is ATP synthase subunit a (265 aa).

6 helical membrane passes run 26–46 (VHLDTLFFSLVSGVLFLFFFY), 88–108 (IGSLALTIFCWVFVMNAIDLI), 132–152 (DISATLGMSVCVFALIIFYTI), 168–188 (PFNHWAFIPVNFLLEAVTLLA), 195–217 (FRLFGNMYAGELIFVLIAVMYMA), and 231–251 (LIWAIFHILVITLQAFIFMML).

The protein belongs to the ATPase A chain family. In terms of assembly, F-type ATPases have 2 components, CF(1) - the catalytic core - and CF(0) - the membrane proton channel. CF(1) has five subunits: alpha(3), beta(3), gamma(1), delta(1), epsilon(1). CF(0) has three main subunits: a(1), b(2) and c(9-12). The alpha and beta chains form an alternating ring which encloses part of the gamma chain. CF(1) is attached to CF(0) by a central stalk formed by the gamma and epsilon chains, while a peripheral stalk is formed by the delta and b chains.

The protein localises to the cell inner membrane. Its function is as follows. Key component of the proton channel; it plays a direct role in the translocation of protons across the membrane. This is ATP synthase subunit a from Histophilus somni (strain 129Pt) (Haemophilus somnus).